The sequence spans 838 residues: Ras-interacting protein RIP3 (838 aa).

Disordered stretches follow at residues 66-97, 157-290, and 305-336; these read VSTS…QQQA, KPTT…TSPK, and NSKT…QQQA. Low complexity-rich tracts occupy residues 67-97, 157-241, and 248-284; these read STSN…QQQA, KPTT…QQKP, and PQNI…QQQQ. Residues 310-321 show a composition bias toward basic and acidic residues; it reads QKSDKTSEKENK. The CRIM domain occupies 441–515; it reads QLKVRVIEKA…KDEVLVLCPN (75 aa). Disordered regions lie at residues 522 to 581 and 594 to 646; these read KSSS…QQTQ and QQQQ…GPDA. 3 stretches are compositionally biased toward low complexity: residues 537-556, 563-581, and 594-620; these read NNNN…SNNN, QPQQ…QQTQ, and QQQQ…QPDQ. The span at 621–631 shows a compositional bias: gly residues; it reads VGGGGGGGGGN. One can recognise an RBD domain in the interval 648–717; that stretch reads LVVKITLPDS…GGADLILVSR (70 aa).

It belongs to the SIN1 family. In terms of assembly, interacts with activated RasG. Part of a complex, TORC2, consisting of tor, lst8, piaA and ripA. Additional proteins, such as 14-3-3 and heat-shock proteins, may also belong to the TORC2 complex.

Functionally, component of a Ras-regulated pathway involved in integrating chemotaxis and signal relay pathways that are essential for aggregation. This is Ras-interacting protein RIP3 (ripA) from Dictyostelium discoideum (Social amoeba).